The primary structure comprises 465 residues: Iron-sulfur cluster assembly SufBD family protein SERP0500 (465 aa).

The protein belongs to the iron-sulfur cluster assembly SufBD family.

The chain is Iron-sulfur cluster assembly SufBD family protein SERP0500 from Staphylococcus epidermidis (strain ATCC 35984 / DSM 28319 / BCRC 17069 / CCUG 31568 / BM 3577 / RP62A).